Consider the following 357-residue polypeptide: Beta-hexosaminidase (357 aa).

Residues D66, R74, R140, and 170–171 each bind substrate; that span reads KH. The active-site Proton donor/acceptor is the H183. D254 functions as the Nucleophile in the catalytic mechanism.

This sequence belongs to the glycosyl hydrolase 3 family. NagZ subfamily.

The protein resides in the cytoplasm. It carries out the reaction Hydrolysis of terminal non-reducing N-acetyl-D-hexosamine residues in N-acetyl-beta-D-hexosaminides.. It functions in the pathway cell wall biogenesis; peptidoglycan recycling. Plays a role in peptidoglycan recycling by cleaving the terminal beta-1,4-linked N-acetylglucosamine (GlcNAc) from peptide-linked peptidoglycan fragments, giving rise to free GlcNAc, anhydro-N-acetylmuramic acid and anhydro-N-acetylmuramic acid-linked peptides. The chain is Beta-hexosaminidase from Chromobacterium violaceum (strain ATCC 12472 / DSM 30191 / JCM 1249 / CCUG 213 / NBRC 12614 / NCIMB 9131 / NCTC 9757 / MK).